The following is a 256-amino-acid chain: MALAKRIIPCLDVDNGRVVKGVKFENIRDAGDPVEIARRYDEQGADEITFLDITASVDGRDTTLHTVERMASQVFIPLTVGGGVRTVQDIRNLLNAGADKVSINTAAVFNPEFVGEAAARFGSQCIVVAIDAKRVSGPGEAPRWEIFTHGGRKPTGLDAVLWAKKMEDLGAGEILLTSMDQDGMKNGFDLGVTRAISDALGIPVIASGGVGNLEHLAAGVIEGHASAVLAASIFHFGEYTVPEAKAYMASRGIVVR.

Active-site residues include D12 and D131.

It belongs to the HisA/HisF family. Heterodimer of HisH and HisF.

Its subcellular location is the cytoplasm. The enzyme catalyses 5-[(5-phospho-1-deoxy-D-ribulos-1-ylimino)methylamino]-1-(5-phospho-beta-D-ribosyl)imidazole-4-carboxamide + L-glutamine = D-erythro-1-(imidazol-4-yl)glycerol 3-phosphate + 5-amino-1-(5-phospho-beta-D-ribosyl)imidazole-4-carboxamide + L-glutamate + H(+). Its pathway is amino-acid biosynthesis; L-histidine biosynthesis; L-histidine from 5-phospho-alpha-D-ribose 1-diphosphate: step 5/9. In terms of biological role, IGPS catalyzes the conversion of PRFAR and glutamine to IGP, AICAR and glutamate. The HisF subunit catalyzes the cyclization activity that produces IGP and AICAR from PRFAR using the ammonia provided by the HisH subunit. This is Imidazole glycerol phosphate synthase subunit HisF from Pseudomonas syringae pv. tomato (strain ATCC BAA-871 / DC3000).